Reading from the N-terminus, the 265-residue chain is MTKIGKKIRIERIINRESRNTVIVPMDHGVSMGPIEGLKNLAETVNAVAEGGANAVVLHKGVVGFGHRGYGKDVGLIIHLSASTSLAPDPNEKVLVCTVEEAIKLGADAVSVHVNVGSKTEAYQLRKLGEISKIAGEWGMPLLAMMYPRGDGINQFDEKAVALAARVGAELGADIIKTNFTGDVESFRRVVDGCPVPVVVAGGPKMGSDEDILRMVRMAMDAGARGVAIGRNIFQANNPTKMTRAISMIVHDNADVSEALEFLKS.

Asp-27 serves as the catalytic Proton acceptor. Residues 27-31 (DHGVS) and 147-149 (YPR) each bind 1-deoxy-D-threo-hexo-2,5-diulose 6-phosphate. Tyr-147 serves as the catalytic Proton donor. Residue Lys-177 is the Schiff-base intermediate with substrate of the active site. Residues 202 to 203 (GG) and 230 to 231 (GR) contribute to the 1-deoxy-D-threo-hexo-2,5-diulose 6-phosphate site.

The protein belongs to the DeoC/FbaB aldolase family. ADHS subfamily. As to quaternary structure, homodecamer.

The enzyme catalyses 1-deoxy-D-threo-hexo-2,5-diulose 6-phosphate + L-aspartate 4-semialdehyde = 2,3-dioxopropyl phosphate + 2-amino-2,3,7-trideoxy-D-lyxo-hept-6-ulosonate. In terms of biological role, catalyzes a transaldol reaction between 6-deoxy-5-ketofructose 1-phosphate (DKFP) and L-aspartate semialdehyde (ASA) with an elimination of hydroxypyruvaldehyde phosphate to yield 2-amino-3,7-dideoxy-D-threo-hept-6-ulosonate (ADH). Plays a key role in an alternative pathway of the biosynthesis of 3-dehydroquinate (DHQ), which is involved in the canonical pathway for the biosynthesis of aromatic amino acids. The chain is Putative 2-amino-3,7-dideoxy-D-threo-hept-6-ulosonate synthase 2 from Archaeoglobus fulgidus (strain ATCC 49558 / DSM 4304 / JCM 9628 / NBRC 100126 / VC-16).